The primary structure comprises 468 residues: 6-phosphogluconate dehydrogenase, decarboxylating (468 aa).

Residues 10–15 (GMAVMG), 33–35 (NRS), 74–76 (VKA), and N102 each bind NADP(+). Substrate-binding positions include N102 and 128–130 (SGG). K183 serves as the catalytic Proton acceptor. Residue 186–187 (HN) coordinates substrate. The active-site Proton donor is the E190. Substrate contacts are provided by Y191, K260, R287, R445, and H451.

This sequence belongs to the 6-phosphogluconate dehydrogenase family. Homodimer.

It carries out the reaction 6-phospho-D-gluconate + NADP(+) = D-ribulose 5-phosphate + CO2 + NADPH. The protein operates within carbohydrate degradation; pentose phosphate pathway; D-ribulose 5-phosphate from D-glucose 6-phosphate (oxidative stage): step 3/3. Functionally, catalyzes the oxidative decarboxylation of 6-phosphogluconate to ribulose 5-phosphate and CO(2), with concomitant reduction of NADP to NADPH. This chain is 6-phosphogluconate dehydrogenase, decarboxylating (gnd), found in Klebsiella pneumoniae.